Reading from the N-terminus, the 365-residue chain is MSQKQTPLKLNTFQGISIVANTMLGAGLLTLPRALTTKANTPDGWITLILEGFIFIFFIYLNTLIQKKHQYPSLFEYLKEGLGKWIGSIIGLLICGYFLGVASFETRAMAEMVKFFLLERTPIQVIILTFICCGIYLMVGGLSDVSRLFPFYLTVTIIILLIVFGISFKIFDINNLRPVLGEGLGPIANSLTVVSISFLGMEVMLFLPEHMKKKKYTFRYASLGFLIPIILYILTYIIVVGALTAPEVKTLIWPTISLFQSFELKGIFIERFESFLLVVWIIQFFTTFVIYGYFAANGLKKTFGLSTKTSMVIIGITVFYFSLWPDDANQVMMYSDYLGYIFVSLFLLPFILFFIVALKRRITTK.

11 consecutive transmembrane segments (helical) span residues Thr12 to Pro32, Trp45 to Ile65, Trp85 to Glu105, Pro122 to Leu142, Leu148 to Phe168, Ile187 to Leu207, Leu223 to Leu243, Thr250 to Glu270, Phe275 to Ala295, Phe303 to Leu323, and Leu338 to Leu358.

The protein belongs to the amino acid-polyamine-organocation (APC) superfamily. Spore germination protein (SGP) (TC 2.A.3.9) family.

Its subcellular location is the cell membrane. Functionally, involved in the germinative response to L-alanine. Could be an amino acid transporter. Forms a complex at the inner spore membrane which acts as a receptor for L-alanine, thus is involved in the stimulation of germination in response to alanine. Can stimulate germination in the absence of gerD and gerK gene products (fructose and glucose receptors, respectively), but the response is improved in their presence. This chain is Spore germination protein A2 (gerAB), found in Bacillus subtilis (strain 168).